A 1095-amino-acid chain; its full sequence is Voltage-gated inwardly rectifying potassium channel KCNH3 (1095 aa).

Residues 1–228 are Cytoplasmic-facing; sequence MPAMRGLLAP…HCGALRATWD (228 aa). A PAS domain is found at 18–90; the sequence is IATRFDGTHS…QQIRKALDEH (73 aa). Residues 93–145 enclose the PAC domain; that stretch reads FKAELILYRKSGLPFWCLLDVIPIKNEKGEVALFLVSHKDISETKNRGGPDNW. Residues 137-150 are compositionally biased toward basic and acidic residues; the sequence is KNRGGPDNWKERGG. Positions 137–161 are disordered; it reads KNRGGPDNWKERGGGRRRYGRAGSK. A helical transmembrane segment spans residues 229–249; it reads GFILLATLYVAVTVPYSVCVS. Residues 250–259 lie on the Extracellular side of the membrane; sequence TAREPSAARG. A helical transmembrane segment spans residues 260–280; it reads PPSVCDLAVEVLFILDIVLNF. Residues 281 to 302 lie on the Cytoplasmic side of the membrane; sequence RTTFVSKSGQVVFAPKSICLHY. A helical membrane pass occupies residues 303–323; the sequence is VTTWFLLDVIAALPFDLLHAF. The Extracellular segment spans residues 324–331; sequence KVNVYVGA. The chain crosses the membrane as a helical; Voltage-sensor span at residues 332-352; it reads HLLKTVRLLRLLRLLPRLDRY. Over 353–361 the chain is Cytoplasmic; sequence SQYSAVVLT. A helical transmembrane segment spans residues 362–382; the sequence is LLMAVFALLAHWVACVWFYIG. Residues 383–464 are Extracellular-facing; it reads QQEIESSESE…GGPSLRSAYI (82 aa). The segment at 417–447 is disordered; the sequence is PDGGNSSGQSENCSSSSSSSGSGGGRGSEAN. Over residues 419–436 the composition is skewed to low complexity; sequence GGNSSGQSENCSSSSSSS. Asn421, Asn428, and Asn447 each carry an N-linked (GlcNAc...) asparagine glycan. Positions 465–485 form an intramembrane region, pore-forming; it reads TSLYFALSSLTSVGFGNVSAN. The Selectivity filter motif lies at 476-481; that stretch reads SVGFGN. Residues 486-490 are Extracellular-facing; it reads TDTEK. The helical transmembrane segment at 491–511 threads the bilayer; that stretch reads IFSICTMLIGALMHAVVFGNV. The Cytoplasmic segment spans residues 512-1095; the sequence is TAIIQRMYAR…QWTQEEGTGV (584 aa). 593 to 708 serves as a coordination point for a nucleoside 3',5'-cyclic phosphate; sequence LFEAASRGCL…FAPRFSRGLR (116 aa). 3 disordered regions span residues 740–823, 854–883, and 965–1069; these read EEKE…LPPM, VGQSGPECSSSPSPGTESGLLTVPLGPSEA, and GSVL…PWDP. Basic residues predominate over residues 784–796; sequence TAPRPRLGGRGRP. Residues 857–872 show a composition bias toward low complexity; sequence SGPECSSSPSPGTESG. The span at 974 to 991 shows a compositional bias: pro residues; the sequence is HPRPGQPPPLMAPWPWGP.

Belongs to the potassium channel family. H (Eag) (TC 1.A.1.20) subfamily. Kv12.2/KCNH3 sub-subfamily. The potassium channel is probably composed of a homo- or heterotetrameric complex of pore-forming alpha subunits that can associate with modulating beta subunits. Interacts with KCNE1 and KCNE3; these interactions regulate KCNH3 trafficking to the plasma membrane and its subsequent voltage-gated potassium channel activity. In terms of processing, N-glycosylated. N-glycosylation mediates traffick to the cell membrane but is not necessary for voltage-gated potassium channel activity. In terms of tissue distribution, detected in brain, but not in other tissues.

Its subcellular location is the cell membrane. The catalysed reaction is K(+)(in) = K(+)(out). Functionally, pore-forming (alpha) subunit of a voltage-gated inwardly rectifying potassium channel. Charactherized by a fast rate of activation during depolarization followed by a rapid inactivation at much more depolarized value causing inward rectification due to a C-type inactivation mechanism. Exhibits a rapid recovery from inactivation. The sequence is that of Voltage-gated inwardly rectifying potassium channel KCNH3 from Mus musculus (Mouse).